We begin with the raw amino-acid sequence, 112 residues long: Putative regulatory protein DP2861 (112 aa).

The protein belongs to the RemA family.

The chain is Putative regulatory protein DP2861 from Desulfotalea psychrophila (strain LSv54 / DSM 12343).